We begin with the raw amino-acid sequence, 55 residues long: Large ribosomal subunit protein bL33 (55 aa).

It belongs to the bacterial ribosomal protein bL33 family.

The chain is Large ribosomal subunit protein bL33 from Micrococcus luteus (strain ATCC 4698 / DSM 20030 / JCM 1464 / CCM 169 / CCUG 5858 / IAM 1056 / NBRC 3333 / NCIMB 9278 / NCTC 2665 / VKM Ac-2230) (Micrococcus lysodeikticus).